We begin with the raw amino-acid sequence, 610 residues long: MNHHLIITPIFHLQIMLPVATLKRPPPPAATCSIYSFSRGTPSLVSKARLSTAAVGGMKNEPSPNHYSDISSSDLNLTRRSGNYGPTMWDFEYIQSIHNDYTEKKYMNRLNKLKEEMKKMIMAEGSQELEKLELIDNLQRLGVSYHFKHEIMQILSSIKQHSTPADSLYATALKFRLFREYGFHISQEIFGGLSETHTEDTKGMLYLYEASFLATEGESELEKARNWTEKHLREYLENKNDDQNVAELVHHALELPLHWRMLRIEARWFINFYKKKQDMIPLLLELAILDFNIVQAAHIEDLKYVARWWKETCLAENLPFARDRLVENFFWTIGVNFLPQYGYFRRIETKVNALVTTIDDVYDVFGTMDELQCFTHAFQRWNIDELDNLPDNMKMCYFALDNFINEVAGDAFEEHRVPILSYLRNAWTDLCKAYLREAKWYFSKYIPTMEEYMDNAWISISAPVILVHAYFLVANPVNKEVLHYLENYHDIIRWSALILRLANDLGTSSEELKRGDVPKSIQCYMNEKKVSEEEARQHIRLLISETWKKLNEAHNVAAHPFPKMFVKCAMNLARMAQCMYQHGDGHGHGDLNSETTNHIMALLFESIPPA.

A chloroplast-targeting transit peptide spans 1-51; it reads MNHHLIITPIFHLQIMLPVATLKRPPPPAATCSIYSFSRGTPSLVSKARLS. (2E)-geranyl diphosphate contacts are provided by R322, D359, D363, R500, and N503. Residues D359 and D363 each coordinate Mg(2+). The DDXXD motif motif lies at 359–363; the sequence is DDVYD. Positions 503, 507, and 511 each coordinate Mg(2+).

The protein belongs to the terpene synthase family. Tpsb subfamily. As to quaternary structure, monomer. Requires Mg(2+) as cofactor. Mn(2+) serves as cofactor. Confined to buds and flowers.

It localises to the plastid. Its subcellular location is the chloroplast. It carries out the reaction (2E)-geranyl diphosphate + H2O = 1,8-cineole + diphosphate. It catalyses the reaction (2E)-geranyl diphosphate = limonene + diphosphate. The catalysed reaction is (2E)-geranyl diphosphate = sabinene + diphosphate. The enzyme catalyses (2E)-geranyl diphosphate = (E)-beta-ocimene + diphosphate. It carries out the reaction (2E)-geranyl diphosphate = beta-myrcene + diphosphate. It catalyses the reaction (2E)-geranyl diphosphate = alpha-pinene + diphosphate. The catalysed reaction is (2E)-geranyl diphosphate + H2O = (S)-alpha-terpineol + diphosphate. The protein operates within secondary metabolite biosynthesis; terpenoid biosynthesis. Functionally, monoterpene synthase involved in the biosynthesis of monoterpene natural products of the 'cineole cassette', volatile compounds present in floral scent. Catalyzes the conversion of (2E)-geranyl diphosphate (GPP) into 1,8-cineole and, as minor products, limonene, sabinene, (E)-beta-ocimene, beta-myrcene, alpha-pinene and alpha-terpineol. This Nicotiana suaveolens (Australian tobacco) protein is 1,8-cineol synthase, chloroplastic.